The sequence spans 352 residues: MTNTPSSAPSPLTYRDAGVDIDAGNELVERIKPLVKRSFRPEVMGGLGGFGALFDLSNKYREPVLVSGTDGVGTKLKLAHQLNRHDTIGIDLVAMCVNDVLVQGAEPLFFLDYFATGKLDIDTAAAVVGGIANGCTEAGCALIGGETAEMPDMYAPGEYDLAGFTVAAVEKSELKDGASVAAGDVLIGIASSGPHSNGYSLVRRIYDRAGRPAELELEGGVKLVDALMAPTRLYVKPILSLLKSHGAAIHGMAHITGGGLTENIIRVVPEGLGLDIQASSWTLPPVFQWLQKEGAVADSEMWRTFNCGIGFVLIVAPDQVAAVSEAVKAQGLDHWTIGQVVTAEGAERVHIG.

The protein belongs to the AIR synthase family.

The protein resides in the cytoplasm. The enzyme catalyses 2-formamido-N(1)-(5-O-phospho-beta-D-ribosyl)acetamidine + ATP = 5-amino-1-(5-phospho-beta-D-ribosyl)imidazole + ADP + phosphate + H(+). It participates in purine metabolism; IMP biosynthesis via de novo pathway; 5-amino-1-(5-phospho-D-ribosyl)imidazole from N(2)-formyl-N(1)-(5-phospho-D-ribosyl)glycinamide: step 2/2. In Stenotrophomonas maltophilia (strain R551-3), this protein is Phosphoribosylformylglycinamidine cyclo-ligase.